The sequence spans 105 residues: Large ribosomal subunit protein uL23 (105 aa).

The protein belongs to the universal ribosomal protein uL23 family. Part of the 50S ribosomal subunit. Contacts protein L29, and trigger factor when it is bound to the ribosome.

One of the early assembly proteins it binds 23S rRNA. One of the proteins that surrounds the polypeptide exit tunnel on the outside of the ribosome. Forms the main docking site for trigger factor binding to the ribosome. This Herminiimonas arsenicoxydans protein is Large ribosomal subunit protein uL23.